We begin with the raw amino-acid sequence, 351 residues long: Autoinducer 2 import system permease protein LsrC (351 aa).

The next 9 helical transmembrane spans lie at 14-34, 39-59, 70-90, 93-113, 115-135, 155-175, 213-233, 252-272, and 284-304; these read LLAI…YFSL, MIFS…LVML, ITGL…GLAA, LFAL…VTWL, IPAI…MLLL, ILFS…AMAW, MNGV…GFIP, GISL…AFLL, and LPAW…LVFD.

This sequence belongs to the binding-protein-dependent transport system permease family. AraH/RbsC subfamily. As to quaternary structure, the complex is composed of two ATP-binding proteins (LsrA), two transmembrane proteins (LsrC and LsrD) and a solute-binding protein (LsrB).

The protein resides in the cell inner membrane. Part of the ABC transporter complex LsrABCD involved in autoinducer 2 (AI-2) import. Probably responsible for the translocation of the substrate across the membrane. The polypeptide is Autoinducer 2 import system permease protein LsrC (lsrC) (Yersinia pestis bv. Antiqua (strain Antiqua)).